Here is a 266-residue protein sequence, read N- to C-terminus: Ras-like protein family member 12 (266 aa).

GTP-binding positions include 27–34 (GRRGAGKS), 74–78 (DTADL), and 134–137 (NKLD).

Belongs to the small GTPase superfamily. Ras family.

It carries out the reaction GTP + H2O = GDP + phosphate + H(+). This Mus musculus (Mouse) protein is Ras-like protein family member 12 (Rasl12).